The following is a 513-amino-acid chain: cAMP-regulated M3R protein (513 aa).

This sequence to D.discoideum protein M3L.

The chain is cAMP-regulated M3R protein (prtB) from Dictyostelium discoideum (Social amoeba).